The sequence spans 407 residues: MDLTGLLLDEEGAFSLTGFQDFMVLPGHQKLSARIRRRLYYGWDLETDCSLEELSSPVADITVELLQKAAPSPIRRLQKKYVAHVSREACISPCAMMLALVYIERLRHRNPDYLQHVSSSDLFLISMMVASKYLYDEGEEEEVFNDEWGAAGGVAVATLNALERSFLSAMDWRLYTDPREIFEVLSWLESCVAEQQGRRRGWYTYTDLCVLLEQPTWQLALGSLCQRLVKLSCLLAVAYVSSVALAVASVAVIHQSLGLSSSPSPGPPELTLVSKSLVQPCVPAPVSQCLTNVSSCLEGSVDLPSLWGSLLAPLTPPLRPPPDPPAPPTPLHKCPLCQKFQRLPPNCRACHTNQTVSIGPSRPLYHARGLAPPWLWSPVAPPFLQPQQCSLFSVMELAHLKSVISPG.

A helical membrane pass occupies residues cysteine 233–isoleucine 253.

This sequence belongs to the CNPPD1 family.

It is found in the membrane. The polypeptide is Protein CNPPD1 (Cnppd1) (Mus musculus (Mouse)).